A 278-amino-acid chain; its full sequence is Elongation factor Ts (278 aa).

An involved in Mg(2+) ion dislocation from EF-Tu region spans residues 80-83 (TDFV).

The protein belongs to the EF-Ts family.

The protein localises to the cytoplasm. Its function is as follows. Associates with the EF-Tu.GDP complex and induces the exchange of GDP to GTP. It remains bound to the aminoacyl-tRNA.EF-Tu.GTP complex up to the GTP hydrolysis stage on the ribosome. This Arthrobacter sp. (strain FB24) protein is Elongation factor Ts.